A 110-amino-acid polypeptide reads, in one-letter code: N(4)-acetylcytidine amidohydrolase (110 aa).

Positions threonine 6–glutamine 93 constitute an ASCH domain. The active-site Proton acceptor is lysine 20. Threonine 23 acts as the Nucleophile in catalysis. Glutamate 73 (proton donor) is an active-site residue.

This sequence belongs to the N(4)-acetylcytidine amidohydrolase family.

It catalyses the reaction N(4)-acetylcytidine + H2O = cytidine + acetate + H(+). The catalysed reaction is N(4)-acetyl-2'-deoxycytidine + H2O = 2'-deoxycytidine + acetate + H(+). The enzyme catalyses N(4)-acetylcytosine + H2O = cytosine + acetate + H(+). Catalyzes the hydrolysis of N(4)-acetylcytidine (ac4C). The protein is N(4)-acetylcytidine amidohydrolase of Shewanella sp. (strain ANA-3).